We begin with the raw amino-acid sequence, 539 residues long: MSKLIEYDETARRAMEVGMDKLADTVRVTLGPRGRHVVLAKAFGGPTVTNDGVTVAREIELEDPFEDLGAQLVKSVATKTNDVAGDGTTTATILAQALIKGGLRLVAAGVNPIALGVGIGKAADAVSEALLASATPVSGKTGIAQVATVSSRDEQIGDLVGEAMSKVGHDGVVSVEESSTLGTELEFTEGIGFDKGFLSAYFVTDFDNQQAVLEDALILLHQDKISSLPDLLPLLEKVAGTGKPLLIVAEDVEGEALATLVVNAIRKTLKAVAVKGPYFGDRRKAFLEDLAVVTGGQVVNPDAGMVLREVGLEVLGSARRVVVSKDDTVIVDGGGTAEAVANRAKHLRAEIDKSDSDWDREKLGERLAKLAGGVAVIKVGAATETALKERKESVEDAVAAAKAAVEEGIVPGGGASLIHQARKALTELRASLTGDEVLGVDVFSEALAAPLFWIAANAGLDGSVVVNKVSELPAGHGLNVNTLSYGDLAADGVIDPVKVTRSAVLNASSVARMVLTTETVVVDKPAKAEDHDHHHGHAH.

ATP contacts are provided by residues T29 to P32, D86 to T90, G413, and D495.

Belongs to the chaperonin (HSP60) family. In terms of assembly, forms a cylinder of 14 subunits composed of two heptameric rings stacked back-to-back. Interacts with the co-chaperonin GroES.

The protein resides in the cytoplasm. It carries out the reaction ATP + H2O + a folded polypeptide = ADP + phosphate + an unfolded polypeptide.. Functionally, together with its co-chaperonin GroES, plays an essential role in assisting protein folding. The GroEL-GroES system forms a nano-cage that allows encapsulation of the non-native substrate proteins and provides a physical environment optimized to promote and accelerate protein folding. The sequence is that of Chaperonin GroEL 1 from Mycobacterium bovis (strain ATCC BAA-935 / AF2122/97).